A 628-amino-acid chain; its full sequence is CMP-5'-(3-aminopropyl)phosphonate synthase (628 aa).

The tract at residues 1–255 is mobA-like NTP transferase; it reads MNENRTFATP…DPGDQRQADF (255 aa). The segment at 278 to 628 is decarboxylase; sequence GVTDHALLYN…TTEGAGRADG (351 aa). Position 466 is an N6-(pyridoxal phosphate)lysine (Lys466).

This sequence in the N-terminal section; belongs to the MobA family. It in the C-terminal section; belongs to the class-I pyridoxal-phosphate-dependent aminotransferase family. The cofactor is Mg(2+). Requires pyridoxal 5'-phosphate as cofactor.

It catalyses the reaction 2-amino-4-phosphonobutanoate + CTP = CMP-5'-(3-amino-3-carboxypropyl)phosphonate + diphosphate. The enzyme catalyses CMP-5'-(3-amino-3-carboxypropyl)phosphonate + H(+) = CMP-5'-(3-aminopropyl)phosphonate + CO2. Its pathway is antibiotic biosynthesis. Bifunctional cytidylyltransferase/decarboxylase involved in the biosynthesis of the phosphonate antibiotic FR-900098, a potent antimalarial agent that acts as an inhibitor of 1-deoxy-D-xylulose 5-phosphate reductoisomerase (DXR), the first enzyme in the nonmevalonate pathway for isoprenoid biosynthesis. Catalyzes the condensation of 2-amino-4-phosphonobutyrate (2APn) and CTP to form CMP-5'-2APn and then decarboxylates CMP-5'-2APn to yield CMP-5'-(3-aminopropyl)phosphonate (CMP-5'-3APn). This Streptomyces rubellomurinus (strain ATCC 31215) protein is CMP-5'-(3-aminopropyl)phosphonate synthase.